The chain runs to 328 residues: PDZ and LIM domain protein 1 (328 aa).

Thr-2 carries the post-translational modification N-acetylthreonine. The 83-residue stretch at 3-85 (TLQIVLQGPG…NMTLTVARSE (83 aa)) folds into the PDZ domain. Phosphoserine is present on residues Ser-90 and Ser-130. Tyr-144 carries the post-translational modification Phosphotyrosine. The LIM zinc-binding domain occupies 257–316 (PMCDKCGTGIVGVFVKLRERHRHPECYVCTDCGTNLKQKGHFFVEDQIYCEKHARERVTP). Residues Cys-259, Cys-262, His-279, Cys-282, Cys-285, Cys-288, Cys-306, and His-309 each coordinate Zn(2+). Phosphothreonine is present on Thr-315. The residue at position 320 (Tyr-320) is a Phosphotyrosine.

Interacts with ACTN1, ACTN2 and ACTN4. Interacts with PDLIM4.

It is found in the cytoplasm. It localises to the cytoskeleton. The protein resides in the myofibril. The protein localises to the sarcomere. Its subcellular location is the z line. Its function is as follows. Cytoskeletal protein that may act as an adapter that brings other proteins (like kinases) to the cytoskeleton. Involved in assembly, disassembly and directioning of stress fibers in fibroblasts. Required for the localization of ACTN1 and PALLD to stress fibers. Required for cell migration and in maintaining cell polarity of fibroblasts. This is PDZ and LIM domain protein 1 (PDLIM1) from Bos taurus (Bovine).